The chain runs to 466 residues: Zinc metalloproteinase/disintegrin (466 aa).

The signal sequence occupies residues 1–6; the sequence is FPYQGS. The propeptide occupies 7–174; it reads SIILESGNVN…PIKKASQLIV (168 aa). The region spanning 180–377 is the Peptidase M12B domain; sequence RYMEIVIVVD…ENPPCILNKP (198 aa). Ca(2+) contacts are provided by glutamate 183 and aspartate 267. Cystine bridges form between cysteine 291–cysteine 372, cysteine 331–cysteine 356, and cysteine 333–cysteine 339. Histidine 316 is a binding site for Zn(2+). The active site involves glutamate 317. Residues histidine 320 and histidine 326 each contribute to the Zn(2+) site. Residues cysteine 372 and asparagine 375 each contribute to the Ca(2+) site. The propeptide occupies 377–401; it reads PLRTDTVSTPVSGNELLEAGKDYDR. A Disintegrin domain is found at 385 to 466; that stretch reads TPVSGNELLE…GDCPRNPYHA (82 aa). Cystine bridges form between cysteine 422/cysteine 428, cysteine 427/cysteine 452, and cysteine 440/cysteine 459. A Cell attachment site motif is present at residues 444–446; it reads RGD.

It belongs to the venom metalloproteinase (M12B) family. P-II subfamily. P-IIa sub-subfamily. Monomer. Zn(2+) is required as a cofactor. As to expression, expressed by the venom gland.

The protein resides in the secreted. Its function is as follows. Impairs hemostasis in the envenomed animal. Functionally, inhibits platelet aggregation induced by ADP, thrombin, platelet-activating factor and collagen. Acts by inhibiting fibrinogen interaction with platelet receptors GPIIb/GPIIIa (ITGA2B/ITGB3). The chain is Zinc metalloproteinase/disintegrin from Deinagkistrodon acutus (Hundred-pace snake).